The sequence spans 156 residues: Ribosomal RNA large subunit methyltransferase H (156 aa).

S-adenosyl-L-methionine-binding positions include Leu72, Gly104, and 123–128 (FGAMVW).

This sequence belongs to the RNA methyltransferase RlmH family. Homodimer.

The protein localises to the cytoplasm. It carries out the reaction pseudouridine(1915) in 23S rRNA + S-adenosyl-L-methionine = N(3)-methylpseudouridine(1915) in 23S rRNA + S-adenosyl-L-homocysteine + H(+). Specifically methylates the pseudouridine at position 1915 (m3Psi1915) in 23S rRNA. The protein is Ribosomal RNA large subunit methyltransferase H of Ruegeria pomeroyi (strain ATCC 700808 / DSM 15171 / DSS-3) (Silicibacter pomeroyi).